The following is a 753-amino-acid chain: Polyadenylate-binding protein, cytoplasmic and nuclear (753 aa).

Residues 1–26 (MSAEVSTTPAADNTVNGTPEATNAAA) show a composition bias toward polar residues. Residues 1–52 (MSAEVSTTPAADNTVNGTPEATNAAATSAPEVTAVESASPSTTPSASQPHSA) are disordered. The span at 37 to 52 (SASPSTTPSASQPHSA) shows a compositional bias: low complexity. RRM domains are found at residues 52–130 (ASLY…WSQR), 140–217 (GNVF…HHIS), 233–310 (TNVY…RAQK), and 336–460 (VNLY…LAQR). 2 disordered regions span residues 367–417 (VMRD…TEKK) and 602–645 (MGQG…REEV). Residues 379-417 (ESEKEKEKESNKENEKEGEEKTEEKPKESEEEPKKTEKK) show a composition bias toward basic and acidic residues. The span at 605-631 (GIRGPGYGQGRGGAPVQGGPRPQGGRG) shows a compositional bias: gly residues. One can recognise a PABC domain in the interval 648-725 (TGGLTAQTLS…ALSVYDEYMK (78 aa)). The tract at residues 728–753 (GEGEAPAESAKPKEDAAETATEENKS) is disordered. The segment covering 737–753 (AKPKEDAAETATEENKS) has biased composition (basic and acidic residues).

This sequence belongs to the polyadenylate-binding protein type-1 family.

Its subcellular location is the cytoplasm. It localises to the nucleus. Functionally, binds the poly(A) tail of mRNA. Appears to be an important mediator of the multiple roles of the poly(A) tail in mRNA biogenesis, stability and translation. In the nucleus, involved in both mRNA cleavage and polyadenylation. Is also required for efficient mRNA export to the cytoplasm. Acts in concert with a poly(A)-specific nuclease (PAN) to affect poly(A) tail shortening, which may occur concomitantly with either nucleocytoplasmic mRNA transport or translational initiation. In the cytoplasm, stimulates translation initiation and regulates mRNA decay through translation termination-coupled poly(A) shortening, probably mediated by PAN. The polypeptide is Polyadenylate-binding protein, cytoplasmic and nuclear (pab1) (Aspergillus fumigatus (strain ATCC MYA-4609 / CBS 101355 / FGSC A1100 / Af293) (Neosartorya fumigata)).